Consider the following 577-residue polypeptide: (E)-beta-farnesene synthase (577 aa).

Asp327, Asp331, Asp474, Ser478, and Glu482 together coordinate Mg(2+). The DDXXD motif motif lies at 327–331; sequence DDTFD.

This sequence belongs to the terpene synthase family. Mg(2+) serves as cofactor. It depends on Co(2+) as a cofactor. Mn(2+) is required as a cofactor. Expressed in flowers.

The protein localises to the cytoplasm. It carries out the reaction (2E,6E)-farnesyl diphosphate = (E)-beta-farnesene + diphosphate. It participates in secondary metabolite biosynthesis; terpenoid biosynthesis. With respect to regulation, strongly inhibited by manganese at concentration higher than 20 uM. Functionally, sesquiterpene cyclase catalyzing the production of beta-farnesene from farnesyl diphosphate. Unable to use geranyl diphosphate as substrate. The polypeptide is (E)-beta-farnesene synthase (CASC125) (Artemisia annua (Sweet wormwood)).